The following is a 157-amino-acid chain: Ribonuclease H (157 aa).

One can recognise an RNase H type-1 domain in the interval 4 to 146 (KRTEITIYTD…CDKLAVKASQ (143 aa)). Residues D13, E51, D73, and D138 each coordinate Mg(2+).

Belongs to the RNase H family. In terms of assembly, monomer. Requires Mg(2+) as cofactor.

It is found in the cytoplasm. The enzyme catalyses Endonucleolytic cleavage to 5'-phosphomonoester.. Its function is as follows. Endonuclease that specifically degrades the RNA of RNA-DNA hybrids. The chain is Ribonuclease H from Trichodesmium erythraeum (strain IMS101).